Reading from the N-terminus, the 284-residue chain is MHNYTSDSDEEIKLEFTDNGKSYTKVYHIPYRTNHSNEKKLICFSIINGENCIYGPNCTYAHSLSEQIIEEDKKFIYRIILDENLMGFSSISESNEKGCINESNKNMSDRKIEEIYKKLLNLTHICEKCTSNKCTGGYNCRNGVFDSSLKICKNDLLTGECLNKLVNIKVDEIIVDKLNSNQTESFKSCQSYQGCINGHHLTLRNIIPYYKYVHQKENSRKYQYQSVRYIDIDQLGKLFCNNNVGSNTYCYQNESDDTESSTDEEISSWFRKDEFEFSDSDNTV.

The segment at 37-65 adopts a C3H1-type zinc-finger fold; that stretch reads NEKKLICFSIINGENCIYGPNCTYAHSLS.

This is an uncharacterized protein from Acanthamoeba polyphaga (Amoeba).